The primary structure comprises 747 residues: DNA damage checkpoint protein LCD1 (747 aa).

S10, S11, and S76 each carry phosphoserine. A coiled-coil region spans residues 62 to 139; that stretch reads NQLVNQLNKA…MEARGKSKRE (78 aa). The segment at 145–180 is disordered; it reads KPPSTTLSTNTNTITPDSSSVAIEAKPQSPQSKKRK. Over residues 146 to 160 the composition is skewed to low complexity; sequence PPSTTLSTNTNTITP.

As to quaternary structure, forms a complex with MEC1. Phosphorylated by MEC1 in a cell cycle dependent manner and in response to DNA damage.

It is found in the cytoplasm. The protein resides in the nucleus. Its function is as follows. Forms a complex with the serine/threonine kinase MEC1 which activates checkpoint signaling upon genotoxic stresses. The MEC1-LCD1 complex is recruited by the single-strand-binding protein complex RPA to DNA lesions in order to initiate the DNA repair by homologous recombination, after the MRX-complex and TEL1 are displaced. Required for the recruitment of MEC1 to DNA lesions, the activation of CHK1 and RAD53 kinases and phosphorylation of RAD9 in response to DNA damage. Required for cell growth and meiotic recombination. This Saccharomyces cerevisiae (strain ATCC 204508 / S288c) (Baker's yeast) protein is DNA damage checkpoint protein LCD1 (LCD1).